The chain runs to 465 residues: MSKYIALENLPVDLQHKGATQNESTADILKQLPHERLQAVLEKIPEEDLEVRRLLSILKKPEVVENEDVQQRRIRLAEILMVDEIDLENINNMENINGEEVDEEDDEDFFTPATSELIFARRFLINYSLERSRKRLQKEMERHQKFNTRQELLSRRTELQRMANLELAGSQLVSTKPISAVSLSTDDMVVATGSWAGDLQVLNSQTLQPLTQKLDSHVGKIGAIDWHPDSNNQMISCAEDGLIKNFQYSNEEGGLRLLGDLVGHERRISDVKYHPSGKFIGSASHDMTWRLWDASTHQELLLQEGHDKGVFSLSFQCDGSLVCSGGMDSLSMLWDIRSGSKVMTLAGHSKPIYTVAWSPNGYQVATGGGDGIINVWDIRKRDEGQLNQILAHRNIVTQVRFSKEDGGKKLVSCGYDNLINVYSSDTWLKMGSLAGHTDKIISLDISNNSHFLVSGGWDRSIKLWN.

7 WD repeats span residues 173–212 (VSTKPISAVSLSTDDMVVATGSWAGDLQVLNSQTLQPLTQ), 216–256 (SHVG…GGLR), 263–302 (GHERRISDVKYHPSGKFIGSASHDMTWRLWDASTHQELLL), 305–344 (GHDKGVFSLSFQCDGSLVCSGGMDSLSMLWDIRSGSKVMT), 347–386 (GHSKPIYTVAWSPNGYQVATGGGDGIINVWDIRKRDEGQL), 391–432 (AHRN…KMGS), and 435–464 (GHTDKIISLDISNNSHFLVSGGWDRSIKLW).

In terms of assembly, component of the U4/U6-U5 tri-snRNP complex composed of the U4, U6 and U5 snRNAs and at least PRP3, PRP4, PRP6, PRP8, PRP18, PRP31, PRP38, SNU13, SNU23, SNU66, SNU114, SPP381, SMB1, SMD1, SMD2, SMD3, SMX2, SMX3, LSM2, LSM3, LSM4, LSM5, LSM6, LSM7, LSM8, BRR2 and DIB1.

Its subcellular location is the nucleus. Involved in RNA splicing. Is required for the association of U4/U6 snRNP with U5 snRNP in an early step of spliceosome assembly. In Saccharomyces cerevisiae (strain ATCC 204508 / S288c) (Baker's yeast), this protein is U4/U6 small nuclear ribonucleoprotein PRP4 (PRP4).